The primary structure comprises 354 residues: Uroporphyrinogen decarboxylase (354 aa).

Residues 27–31 (RQAGR), Asp77, Tyr154, Ser209, and His327 contribute to the substrate site.

The protein belongs to the uroporphyrinogen decarboxylase family. In terms of assembly, homodimer.

The protein localises to the cytoplasm. The catalysed reaction is uroporphyrinogen III + 4 H(+) = coproporphyrinogen III + 4 CO2. It functions in the pathway porphyrin-containing compound metabolism; protoporphyrin-IX biosynthesis; coproporphyrinogen-III from 5-aminolevulinate: step 4/4. In terms of biological role, catalyzes the decarboxylation of four acetate groups of uroporphyrinogen-III to yield coproporphyrinogen-III. This chain is Uroporphyrinogen decarboxylase, found in Shewanella halifaxensis (strain HAW-EB4).